A 290-amino-acid polypeptide reads, in one-letter code: Carbonic anhydrase-related protein (290 aa).

Residues 1–26 are disordered; it reads MADLSFIEDTVAFPEKEEDEEEEEEG. A Phosphoserine modification is found at serine 5. Over residues 16-26 the composition is skewed to acidic residues; the sequence is KEEDEEEEEEG. The Alpha-carbonic anhydrase domain maps to 27 to 289; it reads VEWGYEEGVE…LSDRVIRAAF (263 aa). Histidine 87 serves as the catalytic Proton donor/acceptor. Histidine 118 and histidine 141 together coordinate Zn(2+).

Belongs to the alpha-carbonic anhydrase family.

Functionally, does not have a carbonic anhydrase catalytic activity. The sequence is that of Carbonic anhydrase-related protein (CA8) from Homo sapiens (Human).